Consider the following 174-residue polypeptide: UPF0340 protein MW2038 (174 aa).

Belongs to the UPF0340 family.

This chain is UPF0340 protein MW2038, found in Staphylococcus aureus (strain MW2).